The following is a 394-amino-acid chain: MPDKFKRVHVIVMDSVGIGEAPDAAKFGDFDVDTFGHIAKHVGGLKMPEMGKLGLSNIREIDGIKKAEKPLAYYTKMQEASNGKDTMTGHWEIMGLYIDTPFRVFPDGFPDDLINQIEEKTGRKVIGNKPASGTEIMAELGEEHVKTGALIVYTSADSVLQIAAHEDVVPLEELYEICEFCREITLDDPYMLGRIIARPFVGEPGAFVRTPNRHDYALKPFKPTVMDALKDGGKDVIAIGKISDIFDGEGVTESIRTKSNMDGMDQFIAVLDKDFNGMSFLNLVDFDALFGHRRDPQGYADALVDFDGRLVEVMEKLTDDDLLIITADHGNDPTYSGTDHTREFVPLLVYSPRFKNGGSELELRKTFADLGATVADNFEVKMPEYGTSFLKDLK.

Mn(2+)-binding residues include Asp14, Asp287, His292, Asp328, His329, and His340.

Belongs to the phosphopentomutase family. It depends on Mn(2+) as a cofactor.

Its subcellular location is the cytoplasm. It catalyses the reaction 2-deoxy-alpha-D-ribose 1-phosphate = 2-deoxy-D-ribose 5-phosphate. It carries out the reaction alpha-D-ribose 1-phosphate = D-ribose 5-phosphate. It functions in the pathway carbohydrate degradation; 2-deoxy-D-ribose 1-phosphate degradation; D-glyceraldehyde 3-phosphate and acetaldehyde from 2-deoxy-alpha-D-ribose 1-phosphate: step 1/2. Its function is as follows. Isomerase that catalyzes the conversion of deoxy-ribose 1-phosphate (dRib-1-P) and ribose 1-phosphate (Rib-1-P) to deoxy-ribose 5-phosphate (dRib-5-P) and ribose 5-phosphate (Rib-5-P), respectively. In Listeria monocytogenes serotype 4a (strain HCC23), this protein is Phosphopentomutase.